We begin with the raw amino-acid sequence, 376 residues long: Secreted LysM effector LysM9 (376 aa).

The signal sequence occupies residues 1-25 (MGHFHLSNFIALIGILLVGPTATSG). The 49-residue stretch at 41-89 (SKYVVQAGETCSAIAQAHSITTADIETYNAQSWAWTGCGQISQGDFICL) folds into the LysM domain. Residues 190-219 (SSETSSSMTTSTSATTSVPTTTSTTTTTKT) are disordered.

Belongs to the secreted LysM effector family.

The protein localises to the secreted. In terms of biological role, secreted LysM effector that might have a role in sequestration of chitin oligosaccharides (breakdown products of fungal cell walls that are released during invasion and act as triggers of host immunity) to dampen host defense. The sequence is that of Secreted LysM effector LysM9 from Penicillium expansum (Blue mold rot fungus).